A 363-amino-acid polypeptide reads, in one-letter code: NAD(P)H-quinone oxidoreductase subunit 1, chloroplastic (363 aa).

Helical transmembrane passes span Ile-26–Val-46, Phe-98–Phe-118, Leu-127–Met-147, Thr-246–Val-266, Ser-268–Val-288, Val-300–Ile-320, and Leu-336–Thr-356.

This sequence belongs to the complex I subunit 1 family. In terms of assembly, NDH is composed of at least 16 different subunits, 5 of which are encoded in the nucleus.

Its subcellular location is the plastid. The protein resides in the chloroplast thylakoid membrane. The enzyme catalyses a plastoquinone + NADH + (n+1) H(+)(in) = a plastoquinol + NAD(+) + n H(+)(out). The catalysed reaction is a plastoquinone + NADPH + (n+1) H(+)(in) = a plastoquinol + NADP(+) + n H(+)(out). Functionally, NDH shuttles electrons from NAD(P)H:plastoquinone, via FMN and iron-sulfur (Fe-S) centers, to quinones in the photosynthetic chain and possibly in a chloroplast respiratory chain. The immediate electron acceptor for the enzyme in this species is believed to be plastoquinone. Couples the redox reaction to proton translocation, and thus conserves the redox energy in a proton gradient. The chain is NAD(P)H-quinone oxidoreductase subunit 1, chloroplastic from Coffea arabica (Arabian coffee).